The chain runs to 415 residues: Esterase FrsA (415 aa).

Belongs to the FrsA family.

It catalyses the reaction a carboxylic ester + H2O = an alcohol + a carboxylate + H(+). Functionally, catalyzes the hydrolysis of esters. This is Esterase FrsA from Yersinia enterocolitica serotype O:8 / biotype 1B (strain NCTC 13174 / 8081).